The sequence spans 246 residues: Probable S-methyl-5'-thioinosine phosphorylase (246 aa).

Residues Thr-10 and 52–53 each bind phosphate; that span reads RH. Residue Met-185 coordinates substrate. Position 186 (Thr-186) interacts with phosphate. 209-211 contributes to the substrate binding site; sequence NPA.

The protein belongs to the PNP/MTAP phosphorylase family. MTAP subfamily. As to quaternary structure, homotrimer.

The enzyme catalyses S-methyl-5'-thioinosine + phosphate = 5-(methylsulfanyl)-alpha-D-ribose 1-phosphate + hypoxanthine. It functions in the pathway purine metabolism; purine nucleoside salvage. Functionally, catalyzes the reversible phosphorylation of S-methyl-5'-thioinosine (MTI) to hypoxanthine and 5-methylthioribose-1-phosphate. Involved in the breakdown of S-methyl-5'-thioadenosine (MTA), a major by-product of polyamine biosynthesis. Catabolism of (MTA) occurs via deamination to MTI and phosphorolysis to hypoxanthine. This is Probable S-methyl-5'-thioinosine phosphorylase from Pseudomonas syringae pv. tomato (strain ATCC BAA-871 / DC3000).